The chain runs to 233 residues: Large ribosomal subunit protein uL1 (233 aa).

Belongs to the universal ribosomal protein uL1 family. As to quaternary structure, part of the 50S ribosomal subunit.

In terms of biological role, binds directly to 23S rRNA. The L1 stalk is quite mobile in the ribosome, and is involved in E site tRNA release. Protein L1 is also a translational repressor protein, it controls the translation of the L11 operon by binding to its mRNA. This Thermotoga sp. (strain RQ2) protein is Large ribosomal subunit protein uL1.